We begin with the raw amino-acid sequence, 541 residues long: Membrane protein insertase YidC (541 aa).

The next 6 helical transmembrane spans lie at 6–26 (NILLIGLLFVSFLLWQQWQAD), 325–345 (LVVDYGFLWWLAVPIHWLLMF), 349–369 (FVGNWGMAIILITLTVRGLLF), 420–440 (GGCLPIILQMPIFIALYWVLL), 457–477 (LSVQDPYYILPLLMGVSMFVM), and 500–520 (VIFTVFFLWFPAGLVLYWLVG).

Belongs to the OXA1/ALB3/YidC family. Type 1 subfamily. Interacts with the Sec translocase complex via SecD. Specifically interacts with transmembrane segments of nascent integral membrane proteins during membrane integration.

It is found in the cell inner membrane. Its function is as follows. Required for the insertion and/or proper folding and/or complex formation of integral membrane proteins into the membrane. Involved in integration of membrane proteins that insert both dependently and independently of the Sec translocase complex, as well as at least some lipoproteins. Aids folding of multispanning membrane proteins. The sequence is that of Membrane protein insertase YidC from Shewanella baltica (strain OS223).